Here is a 601-residue protein sequence, read N- to C-terminus: MALSFFGGGGASHLKYFDIRLDEDYIVFRGGEQEAASAQLSGKLLLCLSEPLSAKHVRLNLTGISRVCWHLPSSSASGGRKSWREKVFYEKSWTFRDAGKSKTEILAAGNYEFPFHVILEGSMPESVEGLSDTYVTYRFKAEIGRKYAKDIVVRKPLRIIRTLDSSALELSHAMSVENIWPNKIEYSISTPTKAVIFGTSIRVDFKLIPLLKGLKIGQIVSQLIESHDLTLNPEDPDSVRNTYKNTRTIVNDEHELDEENNLEIIDEAAEGYQFSRFLDLPKTLTRCLQDTDTRGIKIRHKLKFRVQLLNPDGHISELRATLPVSIFISPNLAIDDNNNLVDQTPQSAQRAVNDLAQQAPPLYGEHQFDQLYSEVDPSGYRTPGPGSGPGTPFGTLSRNLSAENLASMNALTNTDISASALHSRLSNLHASRFSNPSPADTDGHTDVEHRRLGVSADYFGPSSGSNSHSPASPELSRRPSDEGYHDHDHIPSGMATPFHPQFAEVESLSRVPSYSTAVRSTVGPCDSELPDYQAVVAEDTAMPTLQSPQQAHIRSAGRGASTGHTGIDVHHLRSGLFNSRTSAHHDDDDRRLRLVQARARV.

Disordered regions lie at residues 374 to 397 (EVDP…GTLS) and 455 to 489 (SADY…DHDH). The segment covering 461–473 (PSSGSNSHSPASP) has biased composition (low complexity). Positions 475–489 (LSRRPSDEGYHDHDH) are enriched in basic and acidic residues.

Belongs to the arrestin family. As to quaternary structure, interacts with hulA.

Functionally, component of the regulatory network controlling carbon source utilization through ubiquitination and deubiquitination involving creA, creB, creC, creD and acrB. May be involved in signaling by recognizing appropriately phosphorylated substrates via its arrestin domains and then recruit a HECT-type ubiquitin ligase such as hulA, leading to ubiquitination of the substrate, providing a link between ubiquitination and phosphorylation in protein regulation and stability. In Neosartorya fischeri (strain ATCC 1020 / DSM 3700 / CBS 544.65 / FGSC A1164 / JCM 1740 / NRRL 181 / WB 181) (Aspergillus fischerianus), this protein is Probable HECT-type ubiquitin ligase-interacting protein creD (creD).